The sequence spans 178 residues: Cytochrome b6-f complex iron-sulfur subunit (178 aa).

Residues 20-42 (LLTFGTATGVALGALYPVANYFM) form a helical membrane-spanning segment. Residues 65–161 (KTGWLATHQA…VDIEDDAVLV (97 aa)) form the Rieske domain. [2Fe-2S] cluster is bound by residues Cys107, His109, Cys125, and His128. Cysteines 112 and 127 form a disulfide.

This sequence belongs to the Rieske iron-sulfur protein family. The 4 large subunits of the cytochrome b6-f complex are cytochrome b6, subunit IV (17 kDa polypeptide, PetD), cytochrome f and the Rieske protein, while the 4 small subunits are PetG, PetL, PetM and PetN. The complex functions as a dimer. [2Fe-2S] cluster is required as a cofactor.

It localises to the cellular thylakoid membrane. The enzyme catalyses 2 oxidized [plastocyanin] + a plastoquinol + 2 H(+)(in) = 2 reduced [plastocyanin] + a plastoquinone + 4 H(+)(out). In terms of biological role, component of the cytochrome b6-f complex, which mediates electron transfer between photosystem II (PSII) and photosystem I (PSI), cyclic electron flow around PSI, and state transitions. This Prochlorococcus marinus (strain MIT 9301) protein is Cytochrome b6-f complex iron-sulfur subunit.